The sequence spans 513 residues: MQLNSTEISDLIKQRIESFNVVSEARNEGTIVSVSDGIIRIHGLADVMQGEMIELPGNRYALALNLERDSVGAVVMGPYADLREGMKVTGTGRILEVPVGPELLGRVVNTLGEPIDGKGPIGAKQTSPVEVIAPGVIDRKSVDQPVQTGYKSVDSMIPIGRGQRELIIGDRQTGKTALAIDAIINQKNSGIYSIYVAIGQKASTIANVVRKLEEHGALKNTIVVVASASESAALQYLAPYSGCAMGEYFRDRGEDALIVYDDLSKQAVAYRQISLLLRRPPGREAFPGDVFYLHSRLLERAARVNEEYVERFTKGEVKGKTGSLTALPIIETQAGDVSAFVPTNVISITDGQIFLQTELFNAGVRPAVDPGISVSRVGGAAQTKIVKKLSGGIRTALAAYRELAAFAQFSSDLDEATKRQLTHGQKVTELMKQKQYAPMSVFDQALVIFAAERGYLTDVELNKVLDFEAALLSYARAHYAELAAQIDKTGAYNDEIEAQLKKLVDDFKATQTW.

An ATP-binding site is contributed by 169-176 (GDRQTGKT).

This sequence belongs to the ATPase alpha/beta chains family. In terms of assembly, F-type ATPases have 2 components, CF(1) - the catalytic core - and CF(0) - the membrane proton channel. CF(1) has five subunits: alpha(3), beta(3), gamma(1), delta(1), epsilon(1). CF(0) has three main subunits: a(1), b(2) and c(9-12). The alpha and beta chains form an alternating ring which encloses part of the gamma chain. CF(1) is attached to CF(0) by a central stalk formed by the gamma and epsilon chains, while a peripheral stalk is formed by the delta and b chains.

The protein resides in the cell inner membrane. The catalysed reaction is ATP + H2O + 4 H(+)(in) = ADP + phosphate + 5 H(+)(out). Functionally, produces ATP from ADP in the presence of a proton gradient across the membrane. The alpha chain is a regulatory subunit. The chain is ATP synthase subunit alpha from Vibrio cholerae serotype O1 (strain ATCC 39541 / Classical Ogawa 395 / O395).